The following is a 384-amino-acid chain: Heparin lyase I (384 aa).

The N-terminal stretch at methionine 1–alanine 21 is a signal peptide. Glutamine 22 is modified (blocked amino end (Gln)). O-linked (Man...) serine glycosylation occurs at serine 39.

As to quaternary structure, monomer. Post-translationally, the N-terminus is blocked.

Its subcellular location is the periplasm. The catalysed reaction is Eliminative cleavage of polysaccharides containing (1-&gt;4)-linked D-glucuronate or L-iduronate residues and (1-&gt;4)-alpha-linked 2-sulfoamino-2-deoxy-6-sulfo-D-glucose residues to give oligosaccharides with terminal 4-deoxy-alpha-D-gluc-4-enuronosyl groups at their non-reducing ends.. In terms of biological role, degrades heparin and heparan sulfate. Also implicated in the release of heparin-bound growth factors from the extracellular matrix. In Pedobacter heparinus (Flavobacterium heparinum), this protein is Heparin lyase I.